The following is a 409-amino-acid chain: 23S rRNA (uracil(747)-C(5))-methyltransferase (409 aa).

Residues Cys61, Cys67, Cys70, and Cys137 each coordinate [4Fe-4S] cluster. 4 residues coordinate S-adenosyl-L-methionine: Gln251, Tyr277, Glu298, and Asp339. Catalysis depends on Cys365, which acts as the Nucleophile.

The protein belongs to the class I-like SAM-binding methyltransferase superfamily. RNA M5U methyltransferase family.

The catalysed reaction is uridine(747) in 23S rRNA + S-adenosyl-L-methionine = 5-methyluridine(747) in 23S rRNA + S-adenosyl-L-homocysteine + H(+). Catalyzes the formation of 5-methyl-uridine at position equivalent to 747 (m5U747) in 23S rRNA. The protein is 23S rRNA (uracil(747)-C(5))-methyltransferase of Pyrococcus furiosus (strain ATCC 43587 / DSM 3638 / JCM 8422 / Vc1).